Consider the following 716-residue polypeptide: uncharacterized protein (716 aa).

Disordered stretches follow at residues 84 to 103 and 153 to 189; these read SPSI…ERYP and VTDE…SQTQ. Ser97 carries the phosphoserine modification. Glycyl lysine isopeptide (Lys-Gly) (interchain with G-Cter in SUMO2) cross-links involve residues Lys201, Lys204, Lys237, Lys283, and Lys626.

This is an uncharacterized protein from Homo sapiens (Human).